A 458-amino-acid polypeptide reads, in one-letter code: F-box/LRR-repeat protein At5g02910 (458 aa).

One can recognise an F-box domain in the interval 10 to 56; it reads MDFISSLPDEILHHILSSVPTKSAIRTSLLSKRWRYVWSETPSLSID. LRR repeat units lie at residues 57-84, 86-112, 133-161, 162-187, 226-251, 260-285, 325-353, and 389-414; these read CRRA…HLHT, LLNR…SLES, KQLF…LSLS, NCTL…ELLY, CLRL…DLNI, TAGF…TIGG, KLLR…HLND, and ESNL…VVLL.

The sequence is that of F-box/LRR-repeat protein At5g02910 from Arabidopsis thaliana (Mouse-ear cress).